Consider the following 265-residue polypeptide: Mlc titration factor A (265 aa).

The Zn(2+) site is built by histidine 111, histidine 148, histidine 152, and glutamate 211.

It belongs to the MtfA family. In terms of assembly, interacts with Mlc. Requires Zn(2+) as cofactor.

The protein localises to the cytoplasm. Functionally, involved in the modulation of the activity of the glucose-phosphotransferase system (glucose-PTS). Interacts with the transcriptional repressor Mlc, preventing its interaction with DNA and leading to the modulation of expression of genes regulated by Mlc, including ptsG, which encodes the PTS system glucose-specific EIICB component. In terms of biological role, shows zinc-dependent metallopeptidase activity. The chain is Mlc titration factor A from Shigella dysenteriae serotype 1 (strain Sd197).